Here is a 287-residue protein sequence, read N- to C-terminus: 4-hydroxybenzoate octaprenyltransferase (287 aa).

A run of 9 helical transmembrane segments spans residues 21–41, 44–64, 91–111, 112–132, 139–159, 160–180, 211–231, 235–255, and 263–283; these read VGIF…AKGA, FKIA…GCIV, VTEA…LVLL, LNRL…VYPF, LPQL…FAAT, VGHV…WPIV, LMIG…GWYL, YWFY…QFLI, and CFAA…GILL.

It belongs to the UbiA prenyltransferase family. It depends on Mg(2+) as a cofactor.

It is found in the cell inner membrane. The enzyme catalyses all-trans-octaprenyl diphosphate + 4-hydroxybenzoate = 4-hydroxy-3-(all-trans-octaprenyl)benzoate + diphosphate. The protein operates within cofactor biosynthesis; ubiquinone biosynthesis. Its function is as follows. Catalyzes the prenylation of para-hydroxybenzoate (PHB) with an all-trans polyprenyl group. Mediates the second step in the final reaction sequence of ubiquinone-8 (UQ-8) biosynthesis, which is the condensation of the polyisoprenoid side chain with PHB, generating the first membrane-bound Q intermediate 3-octaprenyl-4-hydroxybenzoate. The polypeptide is 4-hydroxybenzoate octaprenyltransferase (Coxiella burnetii (strain CbuK_Q154) (Coxiella burnetii (strain Q154))).